A 57-amino-acid polypeptide reads, in one-letter code: Small hydrophobic protein (57 aa).

Residues 1–8 (MPAIQPPL) are Virion surface-facing. The chain crosses the membrane as a helical span at residues 9-29 (YPTFLLLILLSLIITLYVWII). The Intravirion portion of the chain corresponds to 30–57 (STITYKTAVRHAALHQRSFSRWSLDHSL).

The protein belongs to the rubulavirus small hydrophobic protein family. Interacts with host TNFRSF1A, RIPK1 and IRAK1; these interactions interfere with host NF-kappa-B activation at the level of receptor complexes. Interacts with host protein UBQLN4.

The protein localises to the virion membrane. Its subcellular location is the host cell membrane. Functionally, plays a role in the inhibition of the host NF-kappa-B pathway. This inhibition occurs at the receptor level, by preventing the signaling of TNFR1 as well as IL-1R and TLR3. The polypeptide is Small hydrophobic protein (SH) (Mumps virus genotype B (strain Miyahara vaccine) (MuV)).